The following is a 275-amino-acid chain: Putative protein A464R (275 aa).

Positions 51–175 constitute an RNase III domain; that stretch reads KEDVEYLIGM…LMGAIYFDLG (125 aa). The DRBM domain occupies 201–269; it reads NYKDRLLKHT…SKIALHTMGV (69 aa).

The protein belongs to the ribonuclease III family.

The polypeptide is Putative protein A464R (Chlorella (PBCV-1)).